A 436-amino-acid chain; its full sequence is Tol-Pal system protein TolB (436 aa).

Residues methionine 1–alanine 28 form the signal peptide.

Belongs to the TolB family. The Tol-Pal system is composed of five core proteins: the inner membrane proteins TolA, TolQ and TolR, the periplasmic protein TolB and the outer membrane protein Pal. They form a network linking the inner and outer membranes and the peptidoglycan layer.

It is found in the periplasm. In terms of biological role, part of the Tol-Pal system, which plays a role in outer membrane invagination during cell division and is important for maintaining outer membrane integrity. The sequence is that of Tol-Pal system protein TolB from Rhizobium meliloti (strain 1021) (Ensifer meliloti).